Here is a 355-residue protein sequence, read N- to C-terminus: Guanine nucleotide-binding protein G(z) subunit alpha (355 aa).

Residues Met1–Arg14 are compositionally biased toward basic and acidic residues. A disordered region spans residues Met1–Glu26. Gly2 carries N-myristoyl glycine lipidation. Cys3 carries the S-palmitoyl cysteine lipid modification. The G-alpha domain occupies Arg32 to Cys355. The G1 motif stretch occupies residues Lys35 to Thr48. Residues Gly40–Ser47, Leu176–Thr182, Asp201–Gln205, Asn270–Asp273, and Ala327 contribute to the GTP site. Ser47 lines the Mg(2+) pocket. The interval Asp174 to Thr182 is G2 motif. At Arg179 the chain carries ADP-ribosylarginine; by cholera toxin. Thr182 contributes to the Mg(2+) binding site. Residues Phe197 to Arg206 form a G3 motif region. A G4 motif region spans residues Ile266 to Asp273. The segment at Thr325–Thr330 is G5 motif.

This sequence belongs to the G-alpha family. G(i/o/t/z) subfamily. G-proteins are composed of 3 units; alpha, beta and gamma. The alpha chain contains the guanine nucleotide binding site. Interacts with ADGRB2.

It localises to the membrane. Guanine nucleotide-binding proteins (G proteins) are involved as modulators or transducers in various transmembrane signaling systems. The protein is Guanine nucleotide-binding protein G(z) subunit alpha (GNAZ) of Homo sapiens (Human).